The chain runs to 411 residues: 2-acylphloroglucinol 4-prenyltransferase, chloroplastic (411 aa).

A chloroplast-targeting transit peptide spans 1 to 91 (MELSSVSSFS…CNDQRGNSIR (91 aa)). The next 8 membrane-spanning stretches (helical) occupy residues 159-179 (LLGMLAILGSCFYTAGINQIF), 198-218 (ISVESAWLLTLSPAIIGFILI), 226-246 (LLTSLYCLAILSGTIYSVPPF), 253-273 (ITAFLCILMIHAGLNFSVYYA), 278-298 (LGLAFAWSPSFSFITAFITFM), 333-353 (LLGTGLLLLNYVAAISTAIIW), 356-376 (AFKSNIMLLSHAILAFSLIFQ), and 391-411 (KSFYEFIWILFSAEYVVYLFI).

This sequence belongs to the UbiA prenyltransferase family. It depends on Mg(2+) as a cofactor. In terms of tissue distribution, expressed in glandular trichomes called lupulin glands, and in early stage and mature cones. Detected in leaves, but not in root, stem and first stage of flowers. No expression in male flowers.

It is found in the plastid. Its subcellular location is the chloroplast membrane. The enzyme catalyses a 2-acylphloroglucinol + dimethylallyl diphosphate = a 2-acyl-4-prenylphloroglucinol + diphosphate. It functions in the pathway secondary metabolite biosynthesis. In terms of biological role, involved in the biosynthesis of prenylated phenolics natural products which contribute to the bitter taste of beer and display broad biological activities. Catalyzes the first prenylation step in the beta-bitter acid pathway. Abble to transfer dimethylallyl diphosphate (DMAPP) or geranyl diphosphate (GPP) to phlorisovalerophenone (PIVP), phlorisobutrylphenone (PIMP) and naringenin chalcone. Can also use phlorisobutyrophenone (PIBP) and phlormethylbutanophenone (PMBP) as substrates, but not 6'-O-methylated chalcone or naringenin. This chain is 2-acylphloroglucinol 4-prenyltransferase, chloroplastic, found in Humulus lupulus (European hop).